The following is a 439-amino-acid chain: Vacuolar zinc transporter COT1 (439 aa).

Residues 1–9 are Cytoplasmic-facing; the sequence is MKLGSKQVK. A helical membrane pass occupies residues 10 to 30; sequence IISLLLLDTVFFGIEITTGYL. Residues 31-33 lie on the Vacuolar side of the membrane; the sequence is SHS. The chain crosses the membrane as a helical span at residues 34–54; it reads LALIADSFHMLNDIISLVVAL. Topologically, residues 55 to 76 are cytoplasmic; the sequence is WAVNVAKNRNPDSTYTYGWKRA. A helical membrane pass occupies residues 77-97; sequence EILGALINAVFLIALCVSILI. Topologically, residues 98 to 113 are vacuolar; sequence EALQRIIAPPVIENPK. The helical transmembrane segment at 114–134 threads the bilayer; sequence FVLYVGVAGLISNTVGLFLFH. At 135-244 the chain is on the cytoplasmic side; it reads DNDQEHGHGH…RKRSLNMHGV (110 aa). 3 short sequence motifs (histidine repeat) span residues 140-144, 165-169, and 219-223; these read HGHGH, HTHAH, and SSHTI. The span at 207 to 230 shows a compositional bias: polar residues; that stretch reads PENASKTPSYSTSSHTIASGGNYT. The disordered stretch occupies residues 207–231; it reads PENASKTPSYSTSSHTIASGGNYTE. Ser-225 is subject to Phosphoserine. The helical transmembrane segment at 245 to 265 threads the bilayer; the sequence is FLHVLGDALGNIGVMLSAFFI. At 266 to 274 the chain is on the vacuolar side; that stretch reads WKTDYSWKY. A helical transmembrane segment spans residues 275–295; that stretch reads YTDPLVSLIITGIIFSSALPL. The Cytoplasmic segment spans residues 296-439; the sequence is SCKASKILLQ…CNTADCLEDH (144 aa). Residue Lys-301 forms a Glycyl lysine isopeptide (Lys-Gly) (interchain with G-Cter in ubiquitin) linkage. Residues 388–402 are compositionally biased toward basic and acidic residues; it reads TSTERAGDSQGDHLQ. The disordered stretch occupies residues 388–408; it reads TSTERAGDSQGDHLQNDPLSL.

It belongs to the cation diffusion facilitator (CDF) transporter (TC 2.A.4) family. SLC30A subfamily.

Its subcellular location is the vacuole membrane. It catalyses the reaction Zn(2+)(in) = Zn(2+)(out). In terms of biological role, vacuolar transporter that regulates zinc homeostasis by mediating zinc transport and storage into the vacuole. Plays a role in resistance to zinc shock resulting from sudden influx of zinc into cytoplasm. May also participate in the regulation of cobalt levels under normal physiological conditions and may be important in the supply of metal that is required for metalloenzyme or cofactor synthesis. Involved in the resistance to cobalt and rhodium ions. This is Vacuolar zinc transporter COT1 from Saccharomyces cerevisiae (strain ATCC 204508 / S288c) (Baker's yeast).